The chain runs to 194 residues: Adenylate kinase (194 aa).

10–15 (GAGKGT) is an ATP binding site. Positions 30-59 (STGDMLRAAVKAETEIGKKAKAVMDAGELV) are NMP. Residues Thr31, Arg36, 57-59 (ELV), 85-88 (GYPR), and Gln92 each bind AMP. The segment at 126-142 (KRAEDAQAAGQPVRRDD) is LID. Position 127 (Arg127) interacts with ATP. AMP-binding residues include Arg139 and Arg150. Ala178 contacts ATP.

It belongs to the adenylate kinase family. In terms of assembly, monomer.

Its subcellular location is the cytoplasm. The catalysed reaction is AMP + ATP = 2 ADP. It participates in purine metabolism; AMP biosynthesis via salvage pathway; AMP from ADP: step 1/1. Functionally, catalyzes the reversible transfer of the terminal phosphate group between ATP and AMP. Plays an important role in cellular energy homeostasis and in adenine nucleotide metabolism. This is Adenylate kinase from Chelativorans sp. (strain BNC1).